The primary structure comprises 236 residues: 2,3,4,5-tetrahydropyridine-2,6-dicarboxylate N-acetyltransferase (236 aa).

This sequence belongs to the transferase hexapeptide repeat family. DapH subfamily.

It carries out the reaction (S)-2,3,4,5-tetrahydrodipicolinate + acetyl-CoA + H2O = L-2-acetamido-6-oxoheptanedioate + CoA. It participates in amino-acid biosynthesis; L-lysine biosynthesis via DAP pathway; LL-2,6-diaminopimelate from (S)-tetrahydrodipicolinate (acetylase route): step 1/3. Its function is as follows. Catalyzes the transfer of an acetyl group from acetyl-CoA to tetrahydrodipicolinate. This is 2,3,4,5-tetrahydropyridine-2,6-dicarboxylate N-acetyltransferase from Clostridium botulinum (strain Okra / Type B1).